The primary structure comprises 341 residues: D-erythrose-4-phosphate dehydrogenase (341 aa).

Position 12-13 (12-13 (RI)) interacts with NAD(+). Substrate-binding positions include 154 to 156 (SCT), R200, 213 to 214 (TK), and R236. C155 functions as the Nucleophile in the catalytic mechanism. An NAD(+)-binding site is contributed by N318.

This sequence belongs to the glyceraldehyde-3-phosphate dehydrogenase family. Epd subfamily. In terms of assembly, homotetramer.

It localises to the cytoplasm. The catalysed reaction is D-erythrose 4-phosphate + NAD(+) + H2O = 4-phospho-D-erythronate + NADH + 2 H(+). The protein operates within cofactor biosynthesis; pyridoxine 5'-phosphate biosynthesis; pyridoxine 5'-phosphate from D-erythrose 4-phosphate: step 1/5. Catalyzes the NAD-dependent conversion of D-erythrose 4-phosphate to 4-phosphoerythronate. The polypeptide is D-erythrose-4-phosphate dehydrogenase (Edwardsiella ictaluri (strain 93-146)).